The following is a 262-amino-acid chain: Tryptophan synthase alpha chain (262 aa).

Catalysis depends on proton acceptor residues glutamate 49 and aspartate 60.

This sequence belongs to the TrpA family. Tetramer of two alpha and two beta chains.

It carries out the reaction (1S,2R)-1-C-(indol-3-yl)glycerol 3-phosphate + L-serine = D-glyceraldehyde 3-phosphate + L-tryptophan + H2O. Its pathway is amino-acid biosynthesis; L-tryptophan biosynthesis; L-tryptophan from chorismate: step 5/5. Functionally, the alpha subunit is responsible for the aldol cleavage of indoleglycerol phosphate to indole and glyceraldehyde 3-phosphate. The sequence is that of Tryptophan synthase alpha chain from Aquifex aeolicus (strain VF5).